A 547-amino-acid chain; its full sequence is Vacuolar fusion protein MON1 homolog B (547 aa).

M1 carries the N-acetylmethionine modification. Residues 1–15 are compositionally biased toward low complexity; it reads MEVGGDTAAPAPGGA. The segment at 1–106 is disordered; that stretch reads MEVGGDTAAP…GGDPSDEEWR (106 aa). S59 and S61 each carry phosphoserine.

The protein belongs to the MON1/SAND family. As to quaternary structure, interacts with CCNT2; down-regulates CCNT2-mediated activation of viral promoters during herpes simplex virus 1/HHV-1 infection. Found in a complex with RMC1, CCZ1 MON1A and MON1B.

In Homo sapiens (Human), this protein is Vacuolar fusion protein MON1 homolog B (MON1B).